Consider the following 459-residue polypeptide: Phosphomethylpyrimidine synthase (459 aa).

Residues Asn-81, Met-110, Tyr-140, His-176, 196 to 198, 237 to 240, and Glu-276 contribute to the substrate site; these read SRG and DSLR. His-280 contacts Zn(2+). Tyr-303 contributes to the substrate binding site. A Zn(2+)-binding site is contributed by His-344. Residues Cys-424, Cys-427, and Cys-432 each coordinate [4Fe-4S] cluster.

It belongs to the ThiC family. [4Fe-4S] cluster is required as a cofactor.

It catalyses the reaction 5-amino-1-(5-phospho-beta-D-ribosyl)imidazole + S-adenosyl-L-methionine = 4-amino-2-methyl-5-(phosphooxymethyl)pyrimidine + CO + 5'-deoxyadenosine + formate + L-methionine + 3 H(+). It participates in cofactor biosynthesis; thiamine diphosphate biosynthesis. In terms of biological role, catalyzes the synthesis of the hydroxymethylpyrimidine phosphate (HMP-P) moiety of thiamine from aminoimidazole ribotide (AIR) in a radical S-adenosyl-L-methionine (SAM)-dependent reaction. This is Phosphomethylpyrimidine synthase from Gloeobacter violaceus (strain ATCC 29082 / PCC 7421).